We begin with the raw amino-acid sequence, 359 residues long: Ribosomal RNA large subunit methyltransferase M (359 aa).

S-adenosyl-L-methionine contacts are provided by residues S186, 219 to 222, D238, D258, and D275; that span reads CPGG. K304 functions as the Proton acceptor in the catalytic mechanism.

The protein belongs to the class I-like SAM-binding methyltransferase superfamily. RNA methyltransferase RlmE family. RlmM subfamily. In terms of assembly, monomer.

It localises to the cytoplasm. It carries out the reaction cytidine(2498) in 23S rRNA + S-adenosyl-L-methionine = 2'-O-methylcytidine(2498) in 23S rRNA + S-adenosyl-L-homocysteine + H(+). Catalyzes the 2'-O-methylation at nucleotide C2498 in 23S rRNA. The polypeptide is Ribosomal RNA large subunit methyltransferase M (Vibrio vulnificus (strain YJ016)).